A 120-amino-acid polypeptide reads, in one-letter code: Large ribosomal subunit protein uL14 (120 aa).

It belongs to the universal ribosomal protein uL14 family. Part of the 50S ribosomal subunit. Forms a cluster with proteins L3 and L19. In the 70S ribosome, L14 and L19 interact and together make contacts with the 16S rRNA in bridges B5 and B8.

Functionally, binds to 23S rRNA. Forms part of two intersubunit bridges in the 70S ribosome. This is Large ribosomal subunit protein uL14 from Dictyoglomus thermophilum (strain ATCC 35947 / DSM 3960 / H-6-12).